The sequence spans 480 residues: MSTLPERVRERRPLVHAITNCVTMEWVARGLLAAGARPVMARDAAEAPVVAAAADALVLNLGTWSPGLQQAMLEAGQVAARRGIPVVLDPVGAGGTETRTRAALELLERVRVTAVRGNAGEILALAGRDGLVRGVDGPDGRPGPQTERAARAVARRFGCLVAVTGATDLVTDGRRTLAVRAGHPLMSQVPGTGCLATALVAAALAAGTGAGPAGRDRPMEDVDVVAEALLWAGWAGEQAASAASGPGTFAAAFLDRLALRGPLPPGRIAPPLSERLSLYVLVSGATPPDVLEAVLQAGCRMIQFREKRLPLPAQLEAAARVREACRRHGALLVVNDRVDLALAVGADGVHLGQEDLPVAAARRILGPDAVIGATCETAGEARAARDAGADYIGAGPVYVTPSKPDAGEPYGPDVVRRVSEAADLPVVGIGGIGPGRAAPVIAAGAAGVAVISAVLGAPDPGAAARAILDEVRRAKGEVSA.

Residues 1 to 287 (MSTLPERVRE…LYVLVSGATP (287 aa)) are hydroxyethylthiazole kinase. Residue methionine 40 participates in 5-(2-hydroxyethyl)-4-methylthiazole binding. ATP contacts are provided by arginine 116 and threonine 164. A 5-(2-hydroxyethyl)-4-methylthiazole-binding site is contributed by glycine 191. Residues 288–480 (PDVLEAVLQA…VRRAKGEVSA (193 aa)) are thiamine-phosphate synthase. 4-amino-2-methyl-5-(diphosphooxymethyl)pyrimidine contacts are provided by residues 303-307 (QFREK) and asparagine 335. Aspartate 336 and aspartate 355 together coordinate Mg(2+). Threonine 374 contacts 4-amino-2-methyl-5-(diphosphooxymethyl)pyrimidine. 400–402 (TPS) lines the 2-[(2R,5Z)-2-carboxy-4-methylthiazol-5(2H)-ylidene]ethyl phosphate pocket. Lysine 403 serves as a coordination point for 4-amino-2-methyl-5-(diphosphooxymethyl)pyrimidine. Residues glycine 431 and 451-452 (IS) each bind 2-[(2R,5Z)-2-carboxy-4-methylthiazol-5(2H)-ylidene]ethyl phosphate.

This sequence in the N-terminal section; belongs to the Thz kinase family. The protein in the C-terminal section; belongs to the thiamine-phosphate synthase family. Requires Mg(2+) as cofactor.

The catalysed reaction is 5-(2-hydroxyethyl)-4-methylthiazole + ATP = 4-methyl-5-(2-phosphooxyethyl)-thiazole + ADP + H(+). It catalyses the reaction 2-[(2R,5Z)-2-carboxy-4-methylthiazol-5(2H)-ylidene]ethyl phosphate + 4-amino-2-methyl-5-(diphosphooxymethyl)pyrimidine + 2 H(+) = thiamine phosphate + CO2 + diphosphate. It carries out the reaction 2-(2-carboxy-4-methylthiazol-5-yl)ethyl phosphate + 4-amino-2-methyl-5-(diphosphooxymethyl)pyrimidine + 2 H(+) = thiamine phosphate + CO2 + diphosphate. The enzyme catalyses 4-methyl-5-(2-phosphooxyethyl)-thiazole + 4-amino-2-methyl-5-(diphosphooxymethyl)pyrimidine + H(+) = thiamine phosphate + diphosphate. It functions in the pathway cofactor biosynthesis; thiamine diphosphate biosynthesis; 4-methyl-5-(2-phosphoethyl)-thiazole from 5-(2-hydroxyethyl)-4-methylthiazole: step 1/1. Its pathway is cofactor biosynthesis; thiamine diphosphate biosynthesis; thiamine phosphate from 4-amino-2-methyl-5-diphosphomethylpyrimidine and 4-methyl-5-(2-phosphoethyl)-thiazole: step 1/1. Functionally, condenses 4-methyl-5-(beta-hydroxyethyl)thiazole monophosphate (THZ-P) and 2-methyl-4-amino-5-hydroxymethyl pyrimidine pyrophosphate (HMP-PP) to form thiamine monophosphate (TMP). This is Thiamine biosynthesis bifunctional protein ThiM/ThiE (thiM/thiE) from Symbiobacterium thermophilum (strain DSM 24528 / JCM 14929 / IAM 14863 / T).